A 1653-amino-acid chain; its full sequence is Alpha-2-macroglobulin (1653 aa).

Residues 1-17 (MKKLRVAACMLMLALAG) form the signal peptide. Residue Cys-18 is the site of N-palmitoyl cysteine attachment. Cys-18 carries S-diacylglycerol cysteine lipidation. Positions 1187–1190 (CLEQ) form a cross-link, isoglutamyl cysteine thioester (Cys-Gln). A coiled-coil region spans residues 1559 to 1589 (NQNLANGSASLEQSGGEVQNLLNQMQQASIK).

This sequence belongs to the protease inhibitor I39 (alpha-2-macroglobulin) family. Bacterial alpha-2-macroglobulin subfamily. As to quaternary structure, may form homooligomers.

It localises to the cell inner membrane. In terms of biological role, protects the bacterial cell from host peptidases. Acts by a 'trapping' mechanism. Cleavage of the bait-region domain by host peptidases leads to a global conformational change, which results in entrapment of the host peptidase and activation of the thioester bond that covalently binds the attacking host peptidase. Trapped peptidases are still active except against very large substrates. May protect the entire periplam, including the lipoproteins anchored to the periplasmic side of the outer membrane, against intruding endopeptidases. This chain is Alpha-2-macroglobulin (yfhM), found in Escherichia coli (strain K12).